The following is a 358-amino-acid chain: Fructose-bisphosphate aldolase 5, cytosolic (358 aa).

An N-acetylserine modification is found at Ser-2. Arg-39 lines the substrate pocket. Cys-68 is modified (S-glutathionyl cysteine; transient). Residue Cys-173 is modified to S-glutathionyl cysteine; transient; alternate. S-nitrosocysteine; transient; alternate is present on Cys-173. The active-site Proton acceptor is the Glu-183. Lys-225 (schiff-base intermediate with dihydroxyacetone-P) is an active-site residue. Residues 266–268 (SGG) and Arg-298 each bind substrate. A Phosphoserine modification is found at Ser-350.

This sequence belongs to the class I fructose-bisphosphate aldolase family. In terms of assembly, homotetramer. Interacts with TRX3. In terms of processing, S-glutathionylated at Cys-68 and Cys-173. Post-translationally, S-nitrosylated at Cys-173. In terms of tissue distribution, expressed in rosette leaves and cauline leaves.

It is found in the cytoplasm. The protein resides in the cytosol. The enzyme catalyses beta-D-fructose 1,6-bisphosphate = D-glyceraldehyde 3-phosphate + dihydroxyacetone phosphate. Its pathway is carbohydrate degradation; glycolysis; D-glyceraldehyde 3-phosphate and glycerone phosphate from D-glucose: step 4/4. Its function is as follows. Fructose-bisphosphate aldolase that plays a key role in glycolysis and gluconeogenesis. This chain is Fructose-bisphosphate aldolase 5, cytosolic, found in Arabidopsis thaliana (Mouse-ear cress).